Reading from the N-terminus, the 102-residue chain is Small ribosomal subunit protein uS10 (102 aa).

It belongs to the universal ribosomal protein uS10 family. In terms of assembly, part of the 30S ribosomal subunit.

In terms of biological role, involved in the binding of tRNA to the ribosomes. The polypeptide is Small ribosomal subunit protein uS10 (Phenylobacterium zucineum (strain HLK1)).